A 191-amino-acid chain; its full sequence is NAD(P)H dehydrogenase (quinone) (191 aa).

The Flavodoxin-like domain maps to 4–184; that stretch reads ILVIFHSITG…VAKMLGKRVA (181 aa). FMN-binding positions include 10-15, 83-85, and 118-124; these read SITGNT, TRF, and SNEMPHG.

The protein belongs to the WrbA family. In terms of assembly, homodimer and homotetramer; in equilibrium. Requires FMN as cofactor.

The enzyme catalyses a quinone + NADH + H(+) = a quinol + NAD(+). It catalyses the reaction a quinone + NADPH + H(+) = a quinol + NADP(+). It seems to function in response to environmental stress when various electron transfer chains are affected or when the environment is highly oxidizing. It reduces quinones to the hydroquinone state to prevent interaction of the semiquinone with O2 and production of superoxide. It prefers NADH over NADPH. The polypeptide is NAD(P)H dehydrogenase (quinone) (Archaeoglobus fulgidus (strain ATCC 49558 / DSM 4304 / JCM 9628 / NBRC 100126 / VC-16)).